The chain runs to 370 residues: Anhydro-N-acetylmuramic acid kinase (370 aa).

Residue 13-20 participates in ATP binding; the sequence is GTSMDGVD.

The protein belongs to the anhydro-N-acetylmuramic acid kinase family.

The enzyme catalyses 1,6-anhydro-N-acetyl-beta-muramate + ATP + H2O = N-acetyl-D-muramate 6-phosphate + ADP + H(+). Its pathway is amino-sugar metabolism; 1,6-anhydro-N-acetylmuramate degradation. It participates in cell wall biogenesis; peptidoglycan recycling. Functionally, catalyzes the specific phosphorylation of 1,6-anhydro-N-acetylmuramic acid (anhMurNAc) with the simultaneous cleavage of the 1,6-anhydro ring, generating MurNAc-6-P. Is required for the utilization of anhMurNAc either imported from the medium or derived from its own cell wall murein, and thus plays a role in cell wall recycling. This Shewanella frigidimarina (strain NCIMB 400) protein is Anhydro-N-acetylmuramic acid kinase.